We begin with the raw amino-acid sequence, 78 residues long: Large ribosomal subunit protein bL28 (78 aa).

Belongs to the bacterial ribosomal protein bL28 family.

The chain is Large ribosomal subunit protein bL28 from Synechococcus sp. (strain CC9311).